We begin with the raw amino-acid sequence, 476 residues long: UDP-N-acetylmuramate--L-alanine ligase (476 aa).

115–121 (GTHGKTT) contributes to the ATP binding site.

This sequence belongs to the MurCDEF family.

The protein localises to the cytoplasm. The enzyme catalyses UDP-N-acetyl-alpha-D-muramate + L-alanine + ATP = UDP-N-acetyl-alpha-D-muramoyl-L-alanine + ADP + phosphate + H(+). The protein operates within cell wall biogenesis; peptidoglycan biosynthesis. Cell wall formation. The sequence is that of UDP-N-acetylmuramate--L-alanine ligase from Paramagnetospirillum magneticum (strain ATCC 700264 / AMB-1) (Magnetospirillum magneticum).